We begin with the raw amino-acid sequence, 1136 residues long: Pesticidal crystal protein Cry4B protoxin (1136 aa).

The segment at 84 to 282 is domain I; sequence TPERVWNDFM…PADKIDNTKL (199 aa). Positions 283–466 are domain II; the sequence is SKTEFTREIY…SNRVSFAWTH (184 aa). The interval 467-641 is domain III; the sequence is KIVDPNNQIY…PITQSVLDET (175 aa).

This sequence belongs to the delta endotoxin family. In the presence of micelles active toxin forms oligomers that can be fit into cryo-EM maps as trimers. Binds to host (A.gambiae) cadherin AgCad1 (also called BT-R3), probably on the cell surface. Activated toxin may bind its host AgCad1 receptor as a monomer, but also forms an oligomer that is not active. Requires Mg(2+) as cofactor. Post-translationally, treatment of recombinant protein with A.aegypti 3rd instar larvae midgut extract for 1 hour yields major bands of 72 and 45 kDa, the combined proteins are toxic to mosquitoes. Longer digestion, which removes the 72 kDa protein, yields a non-toxic preparation. Proteolysis by yields a 65 kDa toxic protein and 48 and 17 kDa fragments which are not toxic. In terms of tissue distribution, host (A.gambiae) larval midgut; binds to host brush border membranes, probably to cadherin-AgCad1 (Cad1, also called BT-R3).

The protein localises to the spore. Its activity is regulated as follows. Toxic activity on Trichoplusia ni insect cells stably transfected with the AgCad1/BT-R3 receptor leads to oncosis, cell death characterized by cell swelling, membrane blebbing and depletion of energy reserves. Cell death is blocked by EDTA (but not EGTA) and is partially prevented by pretreatment with NF449 (inhibits G-s-alpha-60A and adenylyl cyclase, AC) and 2',5'-dideoxyadenosine 3'-diphosphate (ddADP, inhibits AC), while H-89 and PKAI 14-22 (both inhibit protein kinase A), ouabain (inhibits Na+/K+-ATPase) and a cell exocytosis inhibitor (Exo1) nearly completely prevent the action of the toxin in this system. The cAMP analog pCPT-cAMP and the AC activator FSK enhance toxicity. In terms of biological role, a pesticidal protein active against Aedes and Anopheles mosquito species; activity on Culex species is strain dependent. It remains toxic to permethrin-resistant strains of A.gambiae. Following activation of the protoxin by mosquito larvae midgut extract (or by chymotrypsin or trypsin treatment) it becomes insecticidal. Causes mosquito cell death by activating a host G-protein-coupled receptor which subsequently activates adenylyl cyclase and increases cAMP production. cAMP activates protein kinase A which sets off a series of downstream events which includes increased exocytosis (probably bringing more receptor to the cell membrane), Na+/K+-ATPase activation and eventual host cell death. Another group suggests that alkaline phosphatase serves as the insect receptor and that the protein forms pores in insect cell membranes. This chain is Pesticidal crystal protein Cry4B protoxin, found in Bacillus thuringiensis subsp. israelensis.